Reading from the N-terminus, the 102-residue chain is PqqA binding protein (102 aa).

The protein belongs to the PqqD family. In terms of assembly, monomer. Interacts with PqqE.

The protein operates within cofactor biosynthesis; pyrroloquinoline quinone biosynthesis. Functionally, functions as a PqqA binding protein and presents PqqA to PqqE, in the pyrroloquinoline quinone (PQQ) biosynthetic pathway. In Rhodopseudomonas palustris (strain TIE-1), this protein is PqqA binding protein.